The chain runs to 75 residues: Metallothionein-like protein 1 (75 aa).

This sequence belongs to the metallothionein superfamily. Type 15 family.

In terms of biological role, metallothioneins have a high content of cysteine residues that bind various heavy metals. The chain is Metallothionein-like protein 1 (MT1B) from Trifolium repens (Creeping white clover).